Here is a 112-residue protein sequence, read N- to C-terminus: SRA stem-loop-interacting RNA-binding protein, mitochondrial (112 aa).

Residue S15 is modified to Phosphoserine. The RRM domain maps to 19-98; that stretch reads PIAFVRKIPW…IHVQAQRAKA (80 aa). Phosphothreonine is present on T104. S105 is subject to Phosphoserine.

It localises to the mitochondrion. The protein resides in the nucleus. Its function is as follows. RNA-binding protein that acts as a nuclear receptor corepressor. Probably acts by binding the SRA RNA, and repressing the SRA-mediated nuclear receptor coactivation. Binds the STR7 loop of SRA RNA. Also able to repress glucocorticoid (GR), androgen (AR), thyroid (TR) and VDR-mediated transactivation. The protein is SRA stem-loop-interacting RNA-binding protein, mitochondrial (Slirp) of Mus musculus (Mouse).